The primary structure comprises 49 residues: Soritesidine (49 aa).

The protein localises to the secreted. Very potent toxin that exhibits a wide range of toxicities over various organisms and cells including brine shrimp larvae (Artemia salina), sea hare eggs (Aplysia kurodai), mice, and cultured mammalian cells. An SOR-containing fraction cleaves plasmid DNA in a bivalent metal ion dependent manner suggesting genotoxicity of SOR. The chain is Soritesidine from Spongosorites sp. (strain QM G324170) (Okinawan marine Sponge).